The following is a 282-amino-acid chain: Acetyl-coenzyme A carboxylase carboxyl transferase subunit beta (282 aa).

One can recognise a CoA carboxyltransferase N-terminal domain in the interval 29-282; sequence LMKRCPNCGL…LLKYGGMQDD (254 aa). Cys-33, Cys-36, Cys-51, and Cys-54 together coordinate Zn(2+). A C4-type zinc finger spans residues 33–54; that stretch reads CPNCGLEFFARRLDKYKTCPDC.

Belongs to the AccD/PCCB family. Acetyl-CoA carboxylase is a heterohexamer composed of biotin carboxyl carrier protein (AccB), biotin carboxylase (AccC) and two subunits each of ACCase subunit alpha (AccA) and ACCase subunit beta (AccD). Zn(2+) serves as cofactor.

Its subcellular location is the cytoplasm. The enzyme catalyses N(6)-carboxybiotinyl-L-lysyl-[protein] + acetyl-CoA = N(6)-biotinyl-L-lysyl-[protein] + malonyl-CoA. The protein operates within lipid metabolism; malonyl-CoA biosynthesis; malonyl-CoA from acetyl-CoA: step 1/1. Component of the acetyl coenzyme A carboxylase (ACC) complex. Biotin carboxylase (BC) catalyzes the carboxylation of biotin on its carrier protein (BCCP) and then the CO(2) group is transferred by the transcarboxylase to acetyl-CoA to form malonyl-CoA. The chain is Acetyl-coenzyme A carboxylase carboxyl transferase subunit beta from Lactobacillus delbrueckii subsp. bulgaricus (strain ATCC 11842 / DSM 20081 / BCRC 10696 / JCM 1002 / NBRC 13953 / NCIMB 11778 / NCTC 12712 / WDCM 00102 / Lb 14).